We begin with the raw amino-acid sequence, 261 residues long: uncharacterized protein (261 aa).

A signal peptide spans 1 to 22 (MGYLKKVGMCISLLIVIIFVTS). Residue Cys23 is the site of N-palmitoyl cysteine attachment. Cys23 carries S-diacylglycerol cysteine lipidation.

Belongs to the staphylococcal tandem lipoprotein family.

The protein resides in the cell membrane. This is an uncharacterized protein from Staphylococcus aureus (strain bovine RF122 / ET3-1).